We begin with the raw amino-acid sequence, 124 residues long: Fluoride-specific ion channel FluC (124 aa).

A run of 4 helical transmembrane segments spans residues 5-25, 37-57, 69-89, and 99-119; these read ILAV…AGTW, ATLA…GLFL, GLIV…LDTL, and LALG…WAGL. The Na(+) site is built by Gly76 and Thr79.

It belongs to the fluoride channel Fluc/FEX (TC 1.A.43) family.

It is found in the cell inner membrane. The catalysed reaction is fluoride(in) = fluoride(out). Na(+) is not transported, but it plays an essential structural role and its presence is essential for fluoride channel function. Functionally, fluoride-specific ion channel. Important for reducing fluoride concentration in the cell, thus reducing its toxicity. The chain is Fluoride-specific ion channel FluC from Pseudomonas syringae pv. tomato (strain ATCC BAA-871 / DC3000).